A 679-amino-acid chain; its full sequence is Protein FAM178B (679 aa).

Residues 70–113 (PLDQGPRCPARRPCSPASAPAPTSPKKPKIQAPGETFPTDWSPP) are disordered. Positions 75-90 (PRCPARRPCSPASAPA) are enriched in low complexity.

The protein belongs to the FAM178 family.

The chain is Protein FAM178B from Homo sapiens (Human).